Consider the following 639-residue polypeptide: Probable endo-1,3(4)-beta-glucanase ACLA_073210 (639 aa).

The signal sequence occupies residues 1–21 (MAPSSLLLSVGSLIASSLASA). One can recognise a GH16 domain in the interval 26-290 (IREQSQSYQL…WAGNVFGESG (265 aa)). Asparagine 65 carries an N-linked (GlcNAc...) asparagine glycan. The active-site Nucleophile is glutamate 146. Glutamate 151 functions as the Proton donor in the catalytic mechanism. Disordered regions lie at residues 337–384 (TVAS…TVAE) and 442–545 (QSSS…GSSI). The span at 339-348 (ASPNTASEVH) shows a compositional bias: polar residues. Composition is skewed to low complexity over residues 362-376 (PTVP…VPPA) and 478-488 (TTTEAVAETET). The GPI-anchor amidated alanine moiety is linked to residue alanine 617. Residues 618–639 (GARKLSVGLSGLVGALAVAALA) constitute a propeptide, removed in mature form.

The protein belongs to the glycosyl hydrolase 16 family.

It is found in the cell membrane. The catalysed reaction is Endohydrolysis of (1-&gt;3)- or (1-&gt;4)-linkages in beta-D-glucans when the glucose residue whose reducing group is involved in the linkage to be hydrolyzed is itself substituted at C-3.. In terms of biological role, mixed-linked glucanase involved in the degradation of complex natural cellulosic substrates. This chain is Probable endo-1,3(4)-beta-glucanase ACLA_073210, found in Aspergillus clavatus (strain ATCC 1007 / CBS 513.65 / DSM 816 / NCTC 3887 / NRRL 1 / QM 1276 / 107).